We begin with the raw amino-acid sequence, 788 residues long: Phosphoribosylformylglycinamidine synthase subunit PurL (788 aa).

His-50 is a catalytic residue. Positions 53 and 92 each coordinate ATP. Residue Glu-94 participates in Mg(2+) binding. Substrate is bound by residues 95–98 (SHNH) and Arg-117. His-96 serves as the catalytic Proton acceptor. Asp-118 serves as a coordination point for Mg(2+). Gln-241 serves as a coordination point for substrate. Position 269 (Asp-269) interacts with Mg(2+). Position 313 to 315 (313 to 315 (ESQ)) interacts with substrate. The ATP site is built by Asp-524 and Gly-561. Asn-562 is a binding site for Mg(2+). Ser-564 contacts substrate.

Belongs to the FGAMS family. In terms of assembly, monomer. Part of the FGAM synthase complex composed of 1 PurL, 1 PurQ and 2 PurS subunits.

The protein resides in the cytoplasm. It carries out the reaction N(2)-formyl-N(1)-(5-phospho-beta-D-ribosyl)glycinamide + L-glutamine + ATP + H2O = 2-formamido-N(1)-(5-O-phospho-beta-D-ribosyl)acetamidine + L-glutamate + ADP + phosphate + H(+). It functions in the pathway purine metabolism; IMP biosynthesis via de novo pathway; 5-amino-1-(5-phospho-D-ribosyl)imidazole from N(2)-formyl-N(1)-(5-phospho-D-ribosyl)glycinamide: step 1/2. Functionally, part of the phosphoribosylformylglycinamidine synthase complex involved in the purines biosynthetic pathway. Catalyzes the ATP-dependent conversion of formylglycinamide ribonucleotide (FGAR) and glutamine to yield formylglycinamidine ribonucleotide (FGAM) and glutamate. The FGAM synthase complex is composed of three subunits. PurQ produces an ammonia molecule by converting glutamine to glutamate. PurL transfers the ammonia molecule to FGAR to form FGAM in an ATP-dependent manner. PurS interacts with PurQ and PurL and is thought to assist in the transfer of the ammonia molecule from PurQ to PurL. This chain is Phosphoribosylformylglycinamidine synthase subunit PurL, found in Nostoc punctiforme (strain ATCC 29133 / PCC 73102).